Here is a 650-residue protein sequence, read N- to C-terminus: Sterol O-acyltransferase 2 (650 aa).

Positions 41-79 (LTSSNNSCASEHEGEGEGEDERPATTSSAPTQNHSAGDV) are disordered. Polar residues predominate over residues 64-75 (ATTSSAPTQNHS). Helical transmembrane passes span 223 to 243 (FSGL…KALI), 300 to 320 (TGWA…MYLT), 412 to 432 (INVS…QIEY), 450 to 470 (IFGT…PVAM), and 493 to 513 (LLVD…YLIW). The FYXDWWN motif motif lies at 531-537 (FYGDWWN). The next 2 membrane-spanning stretches (helical) occupy residues 575–595 (ATLM…YVIF) and 630–650 (VIFW…YLTF). His587 is a catalytic residue.

This sequence belongs to the membrane-bound acyltransferase family. Sterol o-acyltransferase subfamily.

It localises to the endoplasmic reticulum membrane. In terms of biological role, sterol O-acyltransferase that catalyzes the formation of stery esters. The polypeptide is Sterol O-acyltransferase 2 (ARE2) (Saccharomyces uvarum (strain ATCC 76518 / CBS 7001 / CLIB 283 / NBRC 10550 / MCYC 623 / NCYC 2669 / NRRL Y-11845) (Yeast)).